The sequence spans 90 residues: Protein S100-A6 (90 aa).

EF-hand domains are found at residues 12 to 47 (LVAIFHKYSGREGDKHTLSKKELKELIQKELTIGSK) and 48 to 83 (LQDAEIARLMEDLDRNKDQEVNFQEYVTFLGALALI). The Ca(2+) site is built by threonine 28 and glutamate 33. Lysine 40 bears the N6-acetyllysine mark. Serine 46 carries the phosphoserine modification. Lysine 47 carries the post-translational modification N6-acetyllysine; alternate. Position 47 is an N6-succinyllysine; alternate (lysine 47). 5 residues coordinate Ca(2+): aspartate 61, asparagine 63, aspartate 65, glutamate 67, and glutamate 72.

It belongs to the S-100 family. As to quaternary structure, homodimer; head to tail assembly of 2 subunits. Interacts with CACYBP in a calcium-dependent manner. Interacts with ANXA2 and ANXA11 (via N-terminus). Interacts with SUGT1. Interacts with TP53; has higher affinity for TP53 that is phosphorylated on its N-terminal domain, and lower affinity for TP53 that is phosphorylated on its C-terminal domain. Interacts with tropomyosin. Interacts with FKBP4. Interacts with PPP5C (via TPR repeats); the interaction is calcium-dependent and modulates PPP5C activity. Interacts with TPPP; this interaction inhibits TPPP dimerization. The N-terminus is blocked.

Its subcellular location is the nucleus envelope. It localises to the cytoplasm. It is found in the cell membrane. Functionally, may function as calcium sensor and modulator, contributing to cellular calcium signaling. May function by interacting with other proteins, such as TPR-containing proteins, and indirectly play a role in many physiological processes such as the reorganization of the actin cytoskeleton and in cell motility. Binds 2 calcium ions. Calcium binding is cooperative. This chain is Protein S100-A6 (S100A6), found in Homo sapiens (Human).